Here is a 644-residue protein sequence, read N- to C-terminus: ATP-dependent zinc metalloprotease FtsH (644 aa).

The Cytoplasmic segment spans residues 1 to 4 (MAKN). The helical transmembrane segment at 5–25 (LILWLVIAVVLMSVFQSFGPS) threads the bilayer. Topologically, residues 26–98 (ESNGRKVDYS…VGEPPEEPSL (73 aa)) are periplasmic. A helical membrane pass occupies residues 99 to 119 (LASIFISWFPMLLLIGVWIFF). Topologically, residues 120-644 (MRQMQGGGGK…NTMSEQLGDK (525 aa)) are cytoplasmic. 192-199 (GPPGTGKT) serves as a coordination point for ATP. Zn(2+) is bound at residue histidine 414. The active site involves glutamate 415. Residues histidine 418 and aspartate 492 each coordinate Zn(2+). The interval 598–644 (VRPPAGWEEPGASNNAGDNGSPKAPRPVDEPRTPNPGNTMSEQLGDK) is disordered. The span at 632–644 (NPGNTMSEQLGDK) shows a compositional bias: polar residues.

In the central section; belongs to the AAA ATPase family. The protein in the C-terminal section; belongs to the peptidase M41 family. Homohexamer. Requires Zn(2+) as cofactor.

It localises to the cell inner membrane. Functionally, acts as a processive, ATP-dependent zinc metallopeptidase for both cytoplasmic and membrane proteins. Plays a role in the quality control of integral membrane proteins. The polypeptide is ATP-dependent zinc metalloprotease FtsH (Escherichia coli O157:H7).